A 215-amino-acid chain; its full sequence is Guanylate kinase (215 aa).

Residues 9–187 form the Guanylate kinase-like domain; it reads GTLYIVSAPS…ALDELSCLVH (179 aa). Residue 16–23 participates in ATP binding; it reads APSGAGKT.

It belongs to the guanylate kinase family.

It is found in the cytoplasm. It catalyses the reaction GMP + ATP = GDP + ADP. Essential for recycling GMP and indirectly, cGMP. The chain is Guanylate kinase from Chromohalobacter salexigens (strain ATCC BAA-138 / DSM 3043 / CIP 106854 / NCIMB 13768 / 1H11).